The following is a 416-amino-acid chain: Serine protease hepsin (416 aa).

Topologically, residues 1 to 18 are cytoplasmic; the sequence is MAKEGGRTAPCCSRPKVA. The chain crosses the membrane as a helical; Signal-anchor for type II membrane protein span at residues 19–39; sequence ALTVGTLLFLTGIGAASWAIV. The Extracellular portion of the chain corresponds to 40–416; it reads TILLRSDQEP…SEATGMVTQP (377 aa). The region spanning 53-150 is the SRCR domain; sequence VQLSPGDSRL…RGRFLTATCQ (98 aa). 8 disulfide bridges follow: Cys76/Cys139, Cys89/Cys149, Cys118/Cys137, Cys152/Cys276, Cys187/Cys203, Cys290/Cys358, Cys321/Cys337, and Cys348/Cys380. N-linked (GlcNAc...) asparagine glycosylation is present at Asn111. The 243-residue stretch at 162-404 folds into the Peptidase S1 domain; the sequence is IVGGQDSSLG…FREWIFQAIK (243 aa). Active-site charge relay system residues include His202 and Asp256. The active-site Charge relay system is the Ser352.

Belongs to the peptidase S1 family. As to expression, widely expressed. Present in brain, heart, kidney, liver, stomach, muscle, lung, testis, skin and eye. Not expressed in ovary and thynus. In inner ear tissues, expressed in stria vascularis, modiolus, organ of Corti and spiral ganglion.

Its subcellular location is the cell membrane. The protein resides in the apical cell membrane. It catalyses the reaction Cleavage after basic amino-acid residues, with Arg strongly preferred to Lys.. In terms of biological role, serine protease that cleaves extracellular substrates, and contributes to the proteolytic processing of growth factors, such as HGF and MST1/HGFL. Plays a role in cell growth and maintenance of cell morphology. Plays a role in the proteolytic processing of ACE2. Mediates the proteolytic cleavage of urinary UMOD that is required for UMOD polymerization. This is Serine protease hepsin (Hpn) from Rattus norvegicus (Rat).